Reading from the N-terminus, the 225-residue chain is Reticulon-like protein B9 (225 aa).

The Reticulon domain occupies 39 to 224 (VADILLWREP…PRGTVKNKKF (186 aa)). 3 consecutive transmembrane segments (helical) span residues 50–70 (IAAT…VVEY), 72–92 (FITL…IWST), and 152–172 (YIVS…IGFV).

It is found in the endoplasmic reticulum membrane. This chain is Reticulon-like protein B9 (RTNLB9), found in Arabidopsis thaliana (Mouse-ear cress).